A 146-amino-acid chain; its full sequence is uncharacterized protein (146 aa).

An HTH marR-type domain is found at 1 to 137 (MLSQEFFNSF…TINVMNQIHE (137 aa)).

This is an uncharacterized protein from Staphylococcus aureus (strain N315).